Consider the following 439-residue polypeptide: MYEKIIILSVFLLTFLPSCFSSYPFNHRDDLFMSSNVYYETNRQHQHGHNTRNSHLKNRHGYAPRSSPRSFNVNTFGAKANGNDDSKAFMKAWEAACSSTGIVYIVAPKNRDYMLKAVTFSGPCKSSLIIFKIYGRIEAWENPSDYKERRHWIVFENVNNLRVEGGGRIDGNGHIWWPKSCKINPQLPCLGAPTAVTFVECNNLRVSNIRLENAQQMHLTFQDCKNVKALNLMVTSPADSPNTDGIHVSGTQNILIQDSIVRTGDDCISIVSGSENVRATGITCGPGHGISIGSLGEDNSEAYVSNVVVNKATLIGTTNGVRIKTWQGGHGMAKNIIFQDIIMKNVTNPIIINQDYCDRVEACPEQKSAVQVSNVLYKNIQGTSSRPIAVKFVCSKNIPCRGISMQNVKLVDQTQQDVSKASCSNVKLDTRGNVSPLCT.

A signal peptide spans 1-21; it reads MYEKIIILSVFLLTFLPSCFS. The disordered stretch occupies residues 43–69; the sequence is RQHQHGHNTRNSHLKNRHGYAPRSSPR. Residues 44–62 show a composition bias toward basic residues; the sequence is QHQHGHNTRNSHLKNRHGY. PbH1 repeat units follow at residues 201–250 and 251–272; these read CNNL…HVSG and TQNI…SIVS. D265 functions as the Proton donor in the catalytic mechanism. H288 is an active-site residue. PbH1 repeat units lie at residues 304-325 and 333-354; these read VSNV…RIKT and AKNI…IINQ.

The protein belongs to the glycosyl hydrolase 28 family. As to expression, expressed predominantly in roots with lower expression levels in rosette leaves, flower buds and siliques. Bearly detected in seeds. Found in flowers undergoing floral organ abscission. Also expressed early in anther development, at the time of microspore separation.

It is found in the secreted. The protein resides in the cell wall. The catalysed reaction is (1,4-alpha-D-galacturonosyl)n+m + H2O = (1,4-alpha-D-galacturonosyl)n + (1,4-alpha-D-galacturonosyl)m.. Functionally, polygalacturonase required for cell type-specific pectin degradation to separate microspores. Involved in anther dehiscence and floral organ abscission. The polypeptide is Polygalacturonase QRT2 (QRT2) (Arabidopsis thaliana (Mouse-ear cress)).